A 304-amino-acid polypeptide reads, in one-letter code: D-alanine--D-alanine ligase (304 aa).

Positions 99–293 constitute an ATP-grasp domain; sequence KKILRYEGIE…YSKLLDMIIE (195 aa). Residue 126–181 participates in ATP binding; that stretch reads LDKLGFPLVVKPNSGGSSVGVKIVYDKDELISMLETVFEWDSEVVIEKYIKGEEIT. Residues D248, E260, and N262 each contribute to the Mg(2+) site.

Belongs to the D-alanine--D-alanine ligase family. It depends on Mg(2+) as a cofactor. Mn(2+) is required as a cofactor.

It is found in the cytoplasm. The enzyme catalyses 2 D-alanine + ATP = D-alanyl-D-alanine + ADP + phosphate + H(+). It participates in cell wall biogenesis; peptidoglycan biosynthesis. Functionally, cell wall formation. In Bacillus anthracis (strain A0248), this protein is D-alanine--D-alanine ligase.